The chain runs to 238 residues: Ribonuclease PH (238 aa).

Phosphate contacts are provided by residues Arg-86 and 124-126 (GTR).

This sequence belongs to the RNase PH family. Homohexameric ring arranged as a trimer of dimers.

It carries out the reaction tRNA(n+1) + phosphate = tRNA(n) + a ribonucleoside 5'-diphosphate. Its function is as follows. Phosphorolytic 3'-5' exoribonuclease that plays an important role in tRNA 3'-end maturation. Removes nucleotide residues following the 3'-CCA terminus of tRNAs; can also add nucleotides to the ends of RNA molecules by using nucleoside diphosphates as substrates, but this may not be physiologically important. Probably plays a role in initiation of 16S rRNA degradation (leading to ribosome degradation) during starvation. The polypeptide is Ribonuclease PH (Photobacterium profundum (strain SS9)).